A 163-amino-acid polypeptide reads, in one-letter code: ATP synthase subunit b 1 (163 aa).

A helical membrane pass occupies residues 5-25 (FDATFFAFVGLILFLALVVYL).

This sequence belongs to the ATPase B chain family. In terms of assembly, F-type ATPases have 2 components, F(1) - the catalytic core - and F(0) - the membrane proton channel. F(1) has five subunits: alpha(3), beta(3), gamma(1), delta(1), epsilon(1). F(0) has three main subunits: a(1), b(2) and c(10-14). The alpha and beta chains form an alternating ring which encloses part of the gamma chain. F(1) is attached to F(0) by a central stalk formed by the gamma and epsilon chains, while a peripheral stalk is formed by the delta and b chains.

It localises to the cell inner membrane. Its function is as follows. F(1)F(0) ATP synthase produces ATP from ADP in the presence of a proton or sodium gradient. F-type ATPases consist of two structural domains, F(1) containing the extramembraneous catalytic core and F(0) containing the membrane proton channel, linked together by a central stalk and a peripheral stalk. During catalysis, ATP synthesis in the catalytic domain of F(1) is coupled via a rotary mechanism of the central stalk subunits to proton translocation. Functionally, component of the F(0) channel, it forms part of the peripheral stalk, linking F(1) to F(0). The sequence is that of ATP synthase subunit b 1 from Rhizobium etli (strain ATCC 51251 / DSM 11541 / JCM 21823 / NBRC 15573 / CFN 42).